Reading from the N-terminus, the 459-residue chain is MEEDRESRVSAKPSGDRVDRLRNLPDCLLFKILLNLPTKDVVKLSVLSRRWRNVWRYVPGLDLECGDFMVREYYDSSEFNALLGFVYRFLGFNSESCLQKFKLTVNWYDDVQLETVHFTEWFNAVVKRKVQHLHILDKTWGRDEVVIPPTVFTCGSLISLNLYDVYLPNREFVSLPSLKVIVLDAVVFDEDFAFEMLVSGCPVLESLSVNKINLNDISESVQVSSQSLLSFSYVADDDDYLEVVIDAPRLHYLKLNDKRTASFIMKNHGSLLKADIDFVFNLGSEYMFDPNYLPTRHIIRDFLVGLSGVKDMIISSSTLQVIYDYSRCEQLPLFRNVSFLRVEFADYRWEMLPIFLESCPNLKSLVLGFSIPPGKEGANILPGPRRFLTSLEYVKIAKPMAAEASEIKLKLVSYFLENSTILKKLTLCLRNFREKEESVIVKKLLTIPRLSPSCQVFVL.

The 47-residue stretch at 18–64 (VDRLRNLPDCLLFKILLNLPTKDVVKLSVLSRRWRNVWRYVPGLDLE) folds into the F-box domain. Residues 375–429 (KEGANILPGPRRFLTSLEYVKIAKPMAAEASEIKLKLVSYFLENSTILKKLTLCL) form the FBD domain.

This chain is FBD-associated F-box protein At4g13985, found in Arabidopsis thaliana (Mouse-ear cress).